We begin with the raw amino-acid sequence, 202 residues long: Superoxide dismutase [Mn/Fe] (202 aa).

Residues His26, His80, Asp163, and His167 each coordinate Fe(3+). 4 residues coordinate Mn(2+): His26, His80, Asp163, and His167.

Belongs to the iron/manganese superoxide dismutase family. As to quaternary structure, homodimer. Requires Mn(2+) as cofactor. It depends on Fe(3+) as a cofactor.

It catalyses the reaction 2 superoxide + 2 H(+) = H2O2 + O2. Its function is as follows. Destroys superoxide anion radicals which are normally produced within the cells and which are toxic to biological systems. Catalyzes the dismutation of superoxide anion radicals into O2 and H2O2 by successive reduction and oxidation of the transition metal ion at the active site. The protein is Superoxide dismutase [Mn/Fe] (sodB) of Methylomonas sp. (strain J).